The primary structure comprises 486 residues: Transmembrane protein 39A (486 aa).

Asparagine 31 carries an N-linked (GlcNAc...) asparagine glycan. 8 helical membrane passes run 72-92, 110-130, 155-175, 182-202, 285-305, 317-337, 418-438, and 444-464; these read SLFF…IQYI, TSLN…VMLA, LILA…WTLV, SVLN…LYCF, EVLF…LCFV, CEHL…QLLP, VLNL…YSLL, and NHTL…FKLL.

This sequence belongs to the TMEM39 family. As to quaternary structure, interacts with SACM1L, SEC23A and SEC24A.

The protein localises to the endoplasmic reticulum membrane. In terms of biological role, regulates autophagy by controlling the spatial distribution and levels of the intracellular phosphatidylinositol 4-phosphate (PtdIns(4)P) pools. Modulates (PtdIns(4)P) levels by regulating the ER-to-Golgi trafficking of the phosphatidylinositide phosphatase SACM1L. The protein is Transmembrane protein 39A (Tmem39a) of Mus musculus (Mouse).